A 176-amino-acid polypeptide reads, in one-letter code: Transcriptional repressor MprA (176 aa).

Positions 26 to 160 (EILLTRLCMH…LEQITRKLLS (135 aa)) constitute an HTH marR-type domain.

Functionally, negative regulator of the multidrug operon emrAB. The polypeptide is Transcriptional repressor MprA (mprA) (Escherichia coli O157:H7).